The following is a 103-amino-acid chain: NADH-quinone oxidoreductase subunit K (103 aa).

3 helical membrane passes run 6-26 (LSHF…GIFL), 32-52 (LVLL…FVAF), and 63-83 (IFVF…LAIL).

Belongs to the complex I subunit 4L family. NDH-1 is composed of 14 different subunits. Subunits NuoA, H, J, K, L, M, N constitute the membrane sector of the complex.

The protein resides in the cell inner membrane. It catalyses the reaction a quinone + NADH + 5 H(+)(in) = a quinol + NAD(+) + 4 H(+)(out). Its function is as follows. NDH-1 shuttles electrons from NADH, via FMN and iron-sulfur (Fe-S) centers, to quinones in the respiratory chain. The immediate electron acceptor for the enzyme in this species is believed to be ubiquinone. Couples the redox reaction to proton translocation (for every two electrons transferred, four hydrogen ions are translocated across the cytoplasmic membrane), and thus conserves the redox energy in a proton gradient. The chain is NADH-quinone oxidoreductase subunit K from Dechloromonas aromatica (strain RCB).